A 1087-amino-acid polypeptide reads, in one-letter code: Exportin-7-B (1087 aa).

Residues 30–96 (AEKALVEFTN…RNYVLTYLAT (67 aa)) enclose the Importin N-terminal domain.

This sequence belongs to the exportin family.

It is found in the cytoplasm. The protein resides in the nucleus. In terms of biological role, mediates the nuclear export of proteins (cargos) with broad substrate specificity. The sequence is that of Exportin-7-B (xpo7-b) from Xenopus laevis (African clawed frog).